The primary structure comprises 337 residues: NADH-quinone oxidoreductase subunit H (337 aa).

The next 8 helical transmembrane spans lie at 9–29 (FAKI…FTYV), 77–97 (FLIA…VIPF), 110–130 (LLYI…AGWA), 154–174 (MGFA…SGIV), 181–201 (FWEW…ISGV), 229–249 (MAFA…SFLA), 274–294 (VPGI…YLWF), and 313–333 (VLIP…YGGV).

It belongs to the complex I subunit 1 family. NDH-1 is composed of 14 different subunits. Subunits NuoA, H, J, K, L, M, N constitute the membrane sector of the complex.

The protein resides in the cell inner membrane. It carries out the reaction a quinone + NADH + 5 H(+)(in) = a quinol + NAD(+) + 4 H(+)(out). Its function is as follows. NDH-1 shuttles electrons from NADH, via FMN and iron-sulfur (Fe-S) centers, to quinones in the respiratory chain. The immediate electron acceptor for the enzyme in this species is believed to be ubiquinone. Couples the redox reaction to proton translocation (for every two electrons transferred, four hydrogen ions are translocated across the cytoplasmic membrane), and thus conserves the redox energy in a proton gradient. This subunit may bind ubiquinone. The sequence is that of NADH-quinone oxidoreductase subunit H from Halorhodospira halophila (strain DSM 244 / SL1) (Ectothiorhodospira halophila (strain DSM 244 / SL1)).